The following is a 496-amino-acid chain: Thiamine transporter 2 (496 aa).

The Cytoplasmic portion of the chain corresponds to 1-7; sequence MDCYRTS. A helical transmembrane segment spans residues 8–28; that stretch reads PSNSWIYTTVILCIFGFFSMM. At 29-53 the chain is on the extracellular side; sequence RPSEPFLIPYLSGPDKNLTSEEMTN. The N-linked (GlcNAc...) asparagine glycan is linked to Asn45. The chain crosses the membrane as a helical span at residues 54-74; it reads EIFPVWTYSYLVLLLPVLVLT. Residues 75–81 lie on the Cytoplasmic side of the membrane; sequence DYVRYKP. The chain crosses the membrane as a helical span at residues 82–102; the sequence is VIILQGISFIITWLLLLFGQG. Over 103–110 the chain is Extracellular; sequence VKTMQVVE. A helical transmembrane segment spans residues 111 to 131; that stretch reads FFYGMVTATEVAYYAYIYSVV. Topologically, residues 132–144 are cytoplasmic; that stretch reads SPEHYQRVSGYCR. Residues 145 to 165 traverse the membrane as a helical segment; that stretch reads SVTLVAYTAGSVLAQLLVSLA. Asn166 carries N-linked (GlcNAc...) asparagine glycosylation. Residues 166 to 169 lie on the Extracellular side of the membrane; sequence NLSY. The helical transmembrane segment at 170–190 threads the bilayer; the sequence is FYLNVISLASVSVAFLFSLFL. The Cytoplasmic segment spans residues 191-282; the sequence is PMPKKSMFFH…YSSKRLFYWS (92 aa). The disordered stretch occupies residues 210–248; that stretch reads SSSVNPVLEETHEGEAPDCEKQKPTSEIPSTSGKLHKGQ. Basic and acidic residues predominate over residues 218 to 233; the sequence is EETHEGEAPDCEKQKP. The segment covering 234 to 248 has biased composition (polar residues); that stretch reads TSEIPSTSGKLHKGQ. A helical transmembrane segment spans residues 283 to 303; sequence LWWAFATAGFNQILNYVQILW. Residues 304–316 lie on the Extracellular side of the membrane; that stretch reads DYKSPSQDSSIYN. The chain crosses the membrane as a helical span at residues 317–337; it reads GAVEATATFGGAVAAFAVGYV. The Cytoplasmic portion of the chain corresponds to 338–342; that stretch reads KVNWD. The chain crosses the membrane as a helical span at residues 343–363; the sequence is LLGELALAVFSVVNAGSLFLM. Residues 364-375 are Extracellular-facing; that stretch reads HYTANIWACYAG. Residues 376–396 traverse the membrane as a helical segment; sequence YLIFKSSYMLLITIAVFQIAV. Topologically, residues 397–405 are cytoplasmic; the sequence is NLSVERYAL. Residues 406 to 426 traverse the membrane as a helical segment; it reads VFGINTFIALVIQTIITVIVV. Over 427 to 434 the chain is Extracellular; it reads DQRGLNLP. Residues 435–455 form a helical membrane-spanning segment; it reads ISIQFLVYGSYFAVIAGIFLM. Residues 456 to 496 are Cytoplasmic-facing; the sequence is RSMYIIYSTKSQKDVQSPAPSENPDMSHPEEESNAIMSTKL. The interval 469-496 is disordered; the sequence is DVQSPAPSENPDMSHPEEESNAIMSTKL.

This sequence belongs to the reduced folate carrier (RFC) transporter (TC 2.A.48) family.

The protein localises to the membrane. The catalysed reaction is thiamine(out) + H(+)(in) = thiamine(in) + H(+)(out). It catalyses the reaction pyridoxine(out) + n H(+)(out) = pyridoxine(in) + n H(+)(in). Functionally, mediates high affinity thiamine uptake, probably via a proton anti-port mechanism. Has no folate transport activity. Mediates H(+)-dependent pyridoxine transport. This is Thiamine transporter 2 (SLC19A3) from Macaca fascicularis (Crab-eating macaque).